The sequence spans 48 residues: Large ribosomal subunit protein uL14 (48 aa).

This sequence belongs to the universal ribosomal protein uL14 family.

The polypeptide is Large ribosomal subunit protein uL14 (RPL23) (Onchocerca volvulus).